The sequence spans 932 residues: MEARALEHERRLAESHGQEALKHAIAAAEIYMRAAEKAANPKDRNRLQRKCSDLIALGERLKANAKSAATSARSPVPESTRTLTIAEKTLLLKSSKLHGNIFPPWEKTPASDEFAASKAADGCFTDHSPFTLSPEQQDIFAGWKRPHEIFMDVPERGVDVFMTATESIDLGQDLATDCSVVASLCAAVRQFGPRTGSLLSSLMYPYDDDVKRPAVSQNGKYIFRMYFNGCWRKVLIDDRLPTSSSERTLYVVDRRNPYLIWPALIEKAYLKIRGGYDFPGSNSGTDLHALTGWIPEQIFLQTDDIELNETWSRIKTAYEQGNALVTLGTGKFSREEERTLGLVREHDYAVLDLRNDGNNRLFLVKNPWRDSLVWTGVGSTATSSTDRSGSPEESMSNTFWMTFEDVLQHFDSLYVNWSPSLFRFRQDHHFTWTIPPKAEELVFTQNPQYSILSHTGSPVWILLNRHWQDSELDILRERKQEHDFHQPLKSLGYMSLSLFASHPPGTRIPLSEGSHHALHQGPFVDSPNTLLRYSPTPGVAQTLVIAQSDLPLPSYSFTLSFFSNSPLTISPASDPLPYNETITGAWTRRTAGGSTVYPSYVTNPQYALTLTRPSPLSLVLSTERADNLPVHIAVLYSNGGQRVTAVVGRDLICSSAEYQRGCTFASTLPSSNTSNVTSSVASNNHGHTSSSLIDPGTYTIVLSTYEPGQTGRYSLRVSAACPFTIEPILSDAAGRLRTPAPSPATFRQGEGRVRARVDVARLTRASVLARSVKTGSTTQKTAMVRVALELGTIEGRKRVLASTASGGGGELAASLSNLSLSERLGGIGGIGGGHIHGGQGTTEGDGYSAKGEFADASLGLRTREVDLDPDVIRVYGGLWLVVEQIGGGGQGHVTEGSDDDGGGGGGGGGGVHVEISSDGVVSIGEWEVADED.

One can recognise a Calpain catalytic domain in the interval 96–419 (KLHGNIFPPW…FDSLYVNWSP (324 aa)). Catalysis depends on residues cysteine 178, histidine 346, and asparagine 366. A disordered region spans residues 890–932 (QGHVTEGSDDDGGGGGGGGGGVHVEISSDGVVSIGEWEVADED). Positions 902 to 911 (GGGGGGGGGV) are enriched in gly residues.

It belongs to the peptidase C2 family. PalB/RIM13 subfamily.

Functionally, required for the proteolytic cleavage of the transcription factor pacc-1 in response to alkaline ambient pH. The chain is Calpain-like protease palB/cpr-8 (cpr-8) from Neurospora crassa (strain ATCC 24698 / 74-OR23-1A / CBS 708.71 / DSM 1257 / FGSC 987).